The following is a 236-amino-acid chain: 2,3,4,5-tetrahydropyridine-2,6-dicarboxylate N-acetyltransferase (236 aa).

Belongs to the transferase hexapeptide repeat family. DapH subfamily.

The enzyme catalyses (S)-2,3,4,5-tetrahydrodipicolinate + acetyl-CoA + H2O = L-2-acetamido-6-oxoheptanedioate + CoA. It participates in amino-acid biosynthesis; L-lysine biosynthesis via DAP pathway; LL-2,6-diaminopimelate from (S)-tetrahydrodipicolinate (acetylase route): step 1/3. Catalyzes the transfer of an acetyl group from acetyl-CoA to tetrahydrodipicolinate. In Thermotoga maritima (strain ATCC 43589 / DSM 3109 / JCM 10099 / NBRC 100826 / MSB8), this protein is 2,3,4,5-tetrahydropyridine-2,6-dicarboxylate N-acetyltransferase.